The following is a 439-amino-acid chain: Enolase (439 aa).

Residues histidine 157 and glutamate 166 each coordinate substrate. The active-site Proton donor is glutamate 209. Residues aspartate 244, glutamate 297, and aspartate 324 each contribute to the Mg(2+) site. Residues glutamate 297 and aspartate 324 each coordinate substrate. Lysine 349 functions as the Proton acceptor in the catalytic mechanism. Residues 376 to 379 (SHRS) and lysine 400 each bind substrate.

The protein belongs to the enolase family. Homodimer. The cofactor is Mg(2+).

Its subcellular location is the cytoplasm. The catalysed reaction is (2R)-2-phosphoglycerate = phosphoenolpyruvate + H2O. It functions in the pathway carbohydrate degradation; glycolysis; pyruvate from D-glyceraldehyde 3-phosphate: step 4/5. The protein is Enolase (ENOL) of Mastigamoeba balamuthi (Phreatamoeba balamuthi).